We begin with the raw amino-acid sequence, 412 residues long: Glutamate-1-semialdehyde 2,1-aminomutase (412 aa).

Lys-260 bears the N6-(pyridoxal phosphate)lysine mark.

The protein belongs to the class-III pyridoxal-phosphate-dependent aminotransferase family. HemL subfamily. It depends on pyridoxal 5'-phosphate as a cofactor.

It is found in the cytoplasm. It catalyses the reaction (S)-4-amino-5-oxopentanoate = 5-aminolevulinate. It functions in the pathway porphyrin-containing compound metabolism; protoporphyrin-IX biosynthesis; 5-aminolevulinate from L-glutamyl-tRNA(Glu): step 2/2. In Methanocorpusculum labreanum (strain ATCC 43576 / DSM 4855 / Z), this protein is Glutamate-1-semialdehyde 2,1-aminomutase.